We begin with the raw amino-acid sequence, 221 residues long: MEEPRPSKRLRSMAPNQASGGPPPEPGCCVADPEGSVEADGPAQPAQPAKPIAYVKPFRRQPPARPESPPPAERGRRRGGSRRPGRGRGRRAGPRGDAGQRQGAEGLMAPDVHIQLDHHGEPGHQGEPEITETAAFSLSETGPPPGTVQEGPGPDVAQPELGFQEPPAAPGPQAVDWQPVLTLYPCIGFRALGDSAVLQVIQTPQGTYVQGVPVFLTDIAY.

Disordered stretches follow at residues 1 to 103 and 137 to 174; these read MEEP…QRQG and SLSETGPPPGTVQEGPGPDVAQPELGFQEPPAAPGPQA. Positions 42–53 are enriched in low complexity; that stretch reads PAQPAQPAKPIA. The segment covering 63 to 72 has biased composition (pro residues); it reads PARPESPPPA. Positions 75 to 93 are enriched in basic residues; sequence GRRRGGSRRPGRGRGRRAG.

This sequence belongs to the PRR20 family.

This is Proline-rich protein 20A (PRR20A) from Homo sapiens (Human).